The chain runs to 567 residues: Urease subunit alpha (567 aa).

Positions 128 to 567 (GGIDPHIHFI…LPLAQLYHLF (440 aa)) constitute a Urease domain. 3 residues coordinate Ni(2+): His-133, His-135, and Lys-216. Lys-216 is subject to N6-carboxylysine. Residue His-218 coordinates substrate. Residues His-245 and His-271 each coordinate Ni(2+). His-319 functions as the Proton donor in the catalytic mechanism. A Ni(2+)-binding site is contributed by Asp-359.

The protein belongs to the metallo-dependent hydrolases superfamily. Urease alpha subunit family. In terms of assembly, heterotrimer of UreA (gamma), UreB (beta) and UreC (alpha) subunits. Three heterotrimers associate to form the active enzyme. Ni cation serves as cofactor. In terms of processing, carboxylation allows a single lysine to coordinate two nickel ions.

Its subcellular location is the cytoplasm. It catalyses the reaction urea + 2 H2O + H(+) = hydrogencarbonate + 2 NH4(+). Its pathway is nitrogen metabolism; urea degradation; CO(2) and NH(3) from urea (urease route): step 1/1. The sequence is that of Urease subunit alpha from Marinobacter nauticus (strain ATCC 700491 / DSM 11845 / VT8) (Marinobacter aquaeolei).